We begin with the raw amino-acid sequence, 594 residues long: Glutamate decarboxylase 1 (594 aa).

Over residues 1 to 13 the composition is skewed to low complexity; sequence MASSTPSSSATSS. The disordered stretch occupies residues 1 to 23; it reads MASSTPSSSATSSNAGADPNTTN. At serine 78 the chain carries Phosphoserine. Position 190–192 (190–192) interacts with 4-aminobutanoate; sequence QLS. At lysine 405 the chain carries N6-(pyridoxal phosphate)lysine. Residue arginine 567 participates in 4-aminobutanoate binding.

Belongs to the group II decarboxylase family. As to quaternary structure, homodimer. Pyridoxal 5'-phosphate serves as cofactor.

The enzyme catalyses L-glutamate + H(+) = 4-aminobutanoate + CO2. Functionally, catalyzes the synthesis of the inhibitory neurotransmitter gamma-aminobutyric acid (GABA) with pyridoxal 5'-phosphate as cofactor. The protein is Glutamate decarboxylase 1 (GAD1) of Felis catus (Cat).